The chain runs to 123 residues: WAP four-disulfide core domain protein 5 (123 aa).

The N-terminal stretch at 1–24 is a signal peptide; it reads MRIQSLLLLGALLAVGSQPPAAFG. WAP domains follow at residues 27–73 and 74–121; these read KGEK…CVPR and VSVK…RDPV. 8 cysteine pairs are disulfide-bonded: cysteine 34/cysteine 62, cysteine 41/cysteine 66, cysteine 49/cysteine 61, cysteine 55/cysteine 70, cysteine 81/cysteine 109, cysteine 88/cysteine 113, cysteine 96/cysteine 108, and cysteine 102/cysteine 117.

The protein localises to the secreted. Putative acid-stable proteinase inhibitor. In Aotus nancymaae (Ma's night monkey), this protein is WAP four-disulfide core domain protein 5 (WFDC5).